The primary structure comprises 803 residues: E3 ubiquitin-protein ligase UHRF2 (803 aa).

The region spanning 1-78 (MWIQVRTIDG…IQLLVRPDSS (78 aa)) is the Ubiquitin-like domain. Polar residues-rich tracts occupy residues 79-96 (LPST…SSHN), 106-115 (GGSSSQPSTS), 167-181 (KNGS…NVNH), and 189-200 (KLDNVPSTSNSD). 2 disordered regions span residues 79 to 115 (LPST…PSTS) and 154 to 200 (RASD…SNSD). Residues 118–312 (TCLIDPGFGL…VDEIFKIEKP (195 aa)) form a required for interaction with histone H3 region. The segment at 195–289 (STSNSDSVAA…KEVRVKVFLG (95 aa)) is interaction with PCNP. A PHD-type zinc finger spans residues 340–396 (DKTCHMCSCHKCGEKRDPNMQLLCDECNMAYHIYCLSPPLDKVPEEEYWYCPSCKTD). The tract at residues 415 to 645 (KMPSASTESR…LQYPAGYPSE (231 aa)) is methyl-CpG binding and interaction with HDAC1. A YDG domain is found at 449–613 (GPIPGIPVGS…FLVWRYLLRR (165 aa)). The segment at 643–676 (PSEKEGKKTKGQSKKQGSEATKRPASDDECPGDS) is disordered. Basic and acidic residues predominate over residues 658–668 (QGSEATKRPAS). Position 668 is a phosphoserine (Ser-668). Residues 734-773 (CVCCQELVYQPVTTECFHNVCKDCLQRSFKAQVFSCPACR) form an RING-type zinc finger.

In terms of assembly, homodimer; disulfide-linked. Binds methylated CpG containing oligonucleotides. Interacts with H3; the interaction has a preference for the 'Lys-9' trimethylated form of H3 (H3K9me3). Interacts with PCNP. Interacts with HDAC1. Interacts directly with CCNE1; the interaction ubiquitinates CCNE1 and appears independent of CCNE1 phosphorylation. Interacts with CCND1; the interaction ubiquitinates CCND1 and appears independent of CCND1 phosphorylation. Interacts with p53/TP53 and RB1. Interacts with UBE2I. Interacts with ZNF618. Interacts with UHRF1. Interacts with FANCD2. Interacts with ATR. Interacts with PCNA. Post-translationally, may be autoubiquitinated; which may lead to proteasomal degradation. In terms of processing, phosphorylated. Phosphorylation may be mediated by CDK2. Autosumoylated. Mostly detected in several tissues, including the thymus, spleen, lung, adrenal gland, and ovary. In addition, found in several tissues in the brain (cerebellum, hippocampus, and cerebral cortex).

It localises to the nucleus. The protein resides in the chromosome. It carries out the reaction S-ubiquitinyl-[E2 ubiquitin-conjugating enzyme]-L-cysteine + [acceptor protein]-L-lysine = [E2 ubiquitin-conjugating enzyme]-L-cysteine + N(6)-ubiquitinyl-[acceptor protein]-L-lysine.. Its pathway is protein modification; protein ubiquitination. Its activity is regulated as follows. E3 ligase activity is robustly activated by 5-hydroxy-methylcytosine. Its function is as follows. E3 ubiquitin ligase that plays important roles in DNA methylation, histone modifications, cell cycle and DNA repair. Acts as a specific reader for 5-hydroxymethylcytosine (5hmC) and thereby recruits various substrates to these sites to ubiquitinate them. This activity also allows the maintenance of 5mC levels at specific genomic loci and regulates neuron-related gene expression. Participates in cell cycle regulation by ubiquitinating cyclins CCND1 and CCNE1 and thus inducing G1 arrest. Also ubiquitinates PCNP leading to its degradation by the proteasome. Plays an active role in DNA damage repair by ubiquitinating p21/CDKN1A leading to its proteasomal degradation. Also promotes DNA repair by acting as an interstrand cross-links (ICLs) sensor. Mechanistically, cooperates with UHRF1 to ensure recruitment of FANCD2 to ICLs, leading to FANCD2 monoubiquitination and subsequent activation. Contributes to UV-induced DNA damage response by physically interacting with ATR in response to irradiation, thereby promoting ATR activation. The polypeptide is E3 ubiquitin-protein ligase UHRF2 (Uhrf2) (Mus musculus (Mouse)).